We begin with the raw amino-acid sequence, 352 residues long: Phenylalanine--tRNA ligase alpha subunit (352 aa).

Position 258 (E258) interacts with Mg(2+).

It belongs to the class-II aminoacyl-tRNA synthetase family. Phe-tRNA synthetase alpha subunit type 1 subfamily. Tetramer of two alpha and two beta subunits. Requires Mg(2+) as cofactor.

It is found in the cytoplasm. It carries out the reaction tRNA(Phe) + L-phenylalanine + ATP = L-phenylalanyl-tRNA(Phe) + AMP + diphosphate + H(+). In Staphylococcus aureus (strain NCTC 8325 / PS 47), this protein is Phenylalanine--tRNA ligase alpha subunit.